The primary structure comprises 248 residues: Probable transcriptional regulatory protein OCAR_7305/OCA5_c08120 (248 aa).

It belongs to the TACO1 family.

It is found in the cytoplasm. The protein is Probable transcriptional regulatory protein OCAR_7305/OCA5_c08120 of Afipia carboxidovorans (strain ATCC 49405 / DSM 1227 / KCTC 32145 / OM5) (Oligotropha carboxidovorans).